The sequence spans 380 residues: Glutamyl-tRNA reductase 1 (380 aa).

Residues 42-45 (TCNR), S93, 98-100 (ETD), and Q104 each bind substrate. The active-site Nucleophile is the C43. 172-177 (GAGAVG) is a binding site for NADP(+).

Belongs to the glutamyl-tRNA reductase family. As to quaternary structure, homodimer.

It carries out the reaction (S)-4-amino-5-oxopentanoate + tRNA(Glu) + NADP(+) = L-glutamyl-tRNA(Glu) + NADPH + H(+). It participates in porphyrin-containing compound metabolism; protoporphyrin-IX biosynthesis; 5-aminolevulinate from L-glutamyl-tRNA(Glu): step 1/2. In terms of biological role, catalyzes the NADPH-dependent reduction of glutamyl-tRNA(Glu) to glutamate 1-semialdehyde (GSA). In Pyrobaculum calidifontis (strain DSM 21063 / JCM 11548 / VA1), this protein is Glutamyl-tRNA reductase 1.